A 341-amino-acid polypeptide reads, in one-letter code: Calcium-binding protein 39 (341 aa).

Belongs to the Mo25 family. Component of a trimeric complex composed of STK11/LKB1, STRAD (STRADA or STRADB) and CAB39/MO25 (CAB39/MO25alpha or CAB39L/MO25beta): the complex tethers STK11/LKB1 in the cytoplasm and stimulates its catalytic activity.

The protein localises to the cytoplasm. Its function is as follows. Component of a complex that binds and activates STK11/LKB1. In the complex, required to stabilize the interaction between CAB39/MO25 (CAB39/MO25alpha or CAB39L/MO25beta) and STK11/LKB1. This is Calcium-binding protein 39 (CAB39) from Bos taurus (Bovine).